The sequence spans 373 residues: tRNA-specific 2-thiouridylase MnmA (373 aa).

ATP is bound by residues 12–19 and Met38; that span reads GMSGGVDS. The segment at 98-100 is interaction with target base in tRNA; it reads NPD. Cys103 functions as the Nucleophile in the catalytic mechanism. A disulfide bridge connects residues Cys103 and Cys200. Gly127 contacts ATP. An interaction with tRNA region spans residues 150-152; that stretch reads KDQ. The Cysteine persulfide intermediate role is filled by Cys200. Residues 312-313 are interaction with tRNA; sequence RY.

The protein belongs to the MnmA/TRMU family.

The protein localises to the cytoplasm. The catalysed reaction is S-sulfanyl-L-cysteinyl-[protein] + uridine(34) in tRNA + AH2 + ATP = 2-thiouridine(34) in tRNA + L-cysteinyl-[protein] + A + AMP + diphosphate + H(+). Catalyzes the 2-thiolation of uridine at the wobble position (U34) of tRNA, leading to the formation of s(2)U34. The polypeptide is tRNA-specific 2-thiouridylase MnmA (Streptococcus pneumoniae (strain JJA)).